We begin with the raw amino-acid sequence, 230 residues long: Orotidine 5'-phosphate decarboxylase (230 aa).

Substrate contacts are provided by residues Asp-9, Lys-31, 58 to 67 (DLKFFDIPNT), Thr-120, Arg-180, Gln-188, Gly-208, and Arg-209. Lys-60 serves as the catalytic Proton donor.

The protein belongs to the OMP decarboxylase family. Type 1 subfamily. Homodimer.

It catalyses the reaction orotidine 5'-phosphate + H(+) = UMP + CO2. The protein operates within pyrimidine metabolism; UMP biosynthesis via de novo pathway; UMP from orotate: step 2/2. Catalyzes the decarboxylation of orotidine 5'-monophosphate (OMP) to uridine 5'-monophosphate (UMP). The chain is Orotidine 5'-phosphate decarboxylase from Maridesulfovibrio salexigens (strain ATCC 14822 / DSM 2638 / NCIMB 8403 / VKM B-1763) (Desulfovibrio salexigens).